The chain runs to 20 residues: Non-secretory ribonuclease (20 aa).

The active-site Proton acceptor is the His16.

It belongs to the pancreatic ribonuclease family. As to quaternary structure, interacts with and forms a tight 1:1 complex with RNH1. Dimerization of two such complexes may occur.

Its subcellular location is the lysosome. The protein localises to the cytoplasmic granule. The enzyme catalyses an [RNA] containing cytidine + H2O = an [RNA]-3'-cytidine-3'-phosphate + a 5'-hydroxy-ribonucleotide-3'-[RNA].. It carries out the reaction an [RNA] containing uridine + H2O = an [RNA]-3'-uridine-3'-phosphate + a 5'-hydroxy-ribonucleotide-3'-[RNA].. Its function is as follows. This is a non-secretory ribonuclease. It is a pyrimidine specific nuclease with a slight preference for U. Cytotoxin and helminthotoxin. Possesses a wide variety of biological activities. The polypeptide is Non-secretory ribonuclease (RNASE2) (Sus scrofa (Pig)).